Reading from the N-terminus, the 109-residue chain is Nucleoid-associated protein Shal_1591 (109 aa).

The interval 87–109 (NQKEKMAEVTGGMQLPPGMKMPF) is disordered.

This sequence belongs to the YbaB/EbfC family. In terms of assembly, homodimer.

It is found in the cytoplasm. Its subcellular location is the nucleoid. In terms of biological role, binds to DNA and alters its conformation. May be involved in regulation of gene expression, nucleoid organization and DNA protection. The sequence is that of Nucleoid-associated protein Shal_1591 from Shewanella halifaxensis (strain HAW-EB4).